A 129-amino-acid chain; its full sequence is Small ribosomal subunit protein bS6 (129 aa).

A disordered region spans residues 100–129 (SIMLKQKEERAPRREERSEAKPEAKSEAAE). Positions 104 to 129 (KQKEERAPRREERSEAKPEAKSEAAE) are enriched in basic and acidic residues.

The protein belongs to the bacterial ribosomal protein bS6 family.

Functionally, binds together with bS18 to 16S ribosomal RNA. The protein is Small ribosomal subunit protein bS6 of Vibrio parahaemolyticus serotype O3:K6 (strain RIMD 2210633).